We begin with the raw amino-acid sequence, 539 residues long: uncharacterized protein (539 aa).

The next 5 membrane-spanning stretches (helical) occupy residues 4-22 (LVEN…GLLL), 27-46 (IFGF…ALST), 56-78 (LIYV…PGFF), 90-112 (ALTL…VLNI), and 155-177 (PVVA…IAIF). RCK C-terminal domains are found at residues 187–269 (KEAE…AIGE) and 271–352 (IDGD…LLGD). The next 4 membrane-spanning stretches (helical) occupy residues 360–382 (FNLL…EFPL), 422–444 (LALR…GAGF), 453–475 (SLTI…LFVG), and 516–538 (YTSV…LFLL).

It belongs to the AAE transporter (TC 2.A.81) family.

It is found in the cell membrane. This is an uncharacterized protein from Corynebacterium glutamicum (strain ATCC 13032 / DSM 20300 / JCM 1318 / BCRC 11384 / CCUG 27702 / LMG 3730 / NBRC 12168 / NCIMB 10025 / NRRL B-2784 / 534).